The sequence spans 197 residues: Nucleoside triphosphate pyrophosphatase (197 aa).

The active-site Proton acceptor is D72.

The protein belongs to the Maf family. The cofactor is a divalent metal cation.

It is found in the cytoplasm. The catalysed reaction is a ribonucleoside 5'-triphosphate + H2O = a ribonucleoside 5'-phosphate + diphosphate + H(+). It catalyses the reaction a 2'-deoxyribonucleoside 5'-triphosphate + H2O = a 2'-deoxyribonucleoside 5'-phosphate + diphosphate + H(+). In terms of biological role, nucleoside triphosphate pyrophosphatase. May have a dual role in cell division arrest and in preventing the incorporation of modified nucleotides into cellular nucleic acids. In Corynebacterium glutamicum (strain R), this protein is Nucleoside triphosphate pyrophosphatase.